We begin with the raw amino-acid sequence, 599 residues long: Crinkler effector protein 8 (599 aa).

A signal peptide spans 1-17 (MVTLFCAVVGVAGSTFP). Positions 18-52 (VDINENKSVGHLKKAIKEEKMYQFPADELQLFLAK) are LQLFLAK domain. Asn23 carries an N-linked (GlcNAc...) asparagine glycan. Residues 53–109 (AGGNAWLSSLTEDVKKLKKGEKTALVKSLTQEEKELQGEDPISECLEGMDPPKVKQI) are DWL domain. Positions 110–116 (HVLVALP) match the HVLVXXP motif motif. The tract at residues 117-590 (PGTSSAPISD…EAAEQESQGK (474 aa)) is C-terminal D2 effector domain. A phosphoserine mark is found at Ser249, Ser281, and Ser385. In terms of domain architecture, Protein kinase spans 289-590 (LSKKLVWSYG…EAAEQESQGK (302 aa)). Asp470 functions as the Proton acceptor in the catalytic mechanism. A phosphoserine mark is found at Ser474 and Ser587. The tract at residues 577–599 (RFEREAAEQESQGKGVRKKHRRA) is disordered. The Host nuclear localization signal signature appears at 590-599 (KGVRKKHRRA).

This sequence in the N-terminal section; belongs to the Crinkler effector family. In the C-terminal section; belongs to the protein kinase superfamily. Dimerizes in host plants. Post-translationally, autophosphorylated at Ser-249, Ser-281, Ser-385, Ser-474 and Ser-587. Additional serines or threonines are also targeted for phosphorylation.

Its subcellular location is the secreted. The protein localises to the host nucleus. It carries out the reaction L-seryl-[protein] + ATP = O-phospho-L-seryl-[protein] + ADP + H(+). The enzyme catalyses L-threonyl-[protein] + ATP = O-phospho-L-threonyl-[protein] + ADP + H(+). In terms of biological role, secreted effector that induces cell death when expressed in host plants. Acts as a kinase and is able to autophosphorylate, however its cell death inducing ability is not a direct result of its kinase activity, but rather a consequence of the phosphorylated state of the five identified serine residues in the CRN8 protein. This Phytophthora infestans (Potato late blight agent) protein is Crinkler effector protein 8.